The primary structure comprises 503 residues: 5'-3' exonuclease PLD4 (503 aa).

The Cytoplasmic segment spans residues 1-36 (MDKKKEHPEMRIPLQTAVEVSDWPCSTSHDPHSGLG). A signal-anchor for type II membrane protein transmembrane segment spans residues 37 to 57 (MVLGMLAVLGLSSVTLILFLW). At 58–503 (QGATSFTSHR…RQVPSQDCVW (446 aa)) the chain is on the lumenal side. 3 N-linked (GlcNAc...) asparagine glycosylation sites follow: Asn-89, Asn-148, and Asn-169. Cys-92 and Cys-248 are joined by a disulfide. A PLD phosphodiesterase 1 domain is found at 207–234 (TGGVLHSKFWVVDGRHIYVGSANMDWRS). Catalysis depends on residues His-212, Lys-214, and Asp-219. The active-site Proton donor is the His-212. 4 N-linked (GlcNAc...) asparagine glycosylation sites follow: Asn-247, Asn-279, Asn-415, and Asn-425. A disulfide bridge links Cys-377 with Cys-501. The PLD phosphodiesterase 2 domain maps to 421-447 (FSRVNHSKFMVTDKTAYVGTSNWSEDY). Residues His-426, Lys-428, and Asp-433 contribute to the active site. The active-site Nucleophile is His-426. Asn-442 carries an N-linked (GlcNAc...) asparagine glycan.

It belongs to the phospholipase D family. Highly N-glycosylated. Enriched in the white matter of early postnatal brains, as well as in splenic marginal zone cells. Highly expressed in dendritic cells (DCs) and other myeloid cells, with lower expression in B cell.

It is found in the endoplasmic reticulum membrane. The protein localises to the golgi apparatus. The protein resides in the trans-Golgi network membrane. Its subcellular location is the nucleus. It localises to the early endosome. It is found in the cytoplasmic vesicle. The protein localises to the phagosome. The protein resides in the lysosome. It carries out the reaction Exonucleolytic cleavage in the 5'- to 3'-direction to yield nucleoside 3'-phosphates.. The catalysed reaction is a 5'-end 5'-dephospho-ribonucleotidyl-ribonucleotide-RNA + H2O = a ribonucleoside 3'-phosphate + a 5'-end dephospho-ribonucleoside-RNA + H(+). It catalyses the reaction a ribonucleoside 3'-phosphate-2'-3'-cyclophospho-GMP + H2O = a ribonucleoside 3'-phosphate + 2',3'-cyclophospho-GMP + H(+). The enzyme catalyses a 5'-end 5'-dephospho-2'-deoxyribonucleotidyl-2'-deoxyribonucleotide in single-stranded DNA + H2O = a 5'-end dephospho-2'-deoxyribonucleoside in single-stranded DNA + a 2'-deoxyribonucleoside 3'-phosphate + H(+). It carries out the reaction a 5'-end 5'-phospho-2'-deoxyribonucleotide in single-stranded DNA + H2O = a 5'-end 5'-dephospho-2'-deoxyribonucleotide in single-stranded DNA + phosphate. The catalysed reaction is a 3-lyso-sn-glycero-1-phospho-(3'-acyl-1'-sn-glycerol) + a 1-acyl-sn-glycerol = a 3-acyl-sn-glycero-1-phospho-(3'-acyl-1'-sn-glycerol) + glycerol. It catalyses the reaction 3-lyso-sn-glycero-1-phospho-(3'-(9Z-octadecenoyl)-1'-sn-glycerol) + 1-(9Z-octadecenoyl)-sn-glycerol = 3-(9Z-octadecenoyl)-sn-glycero-1-phospho-(3'-(9Z-octadecenoyl)-1'-sn-glycerol) + glycerol. The exonuclease activity toward ssDNA substrate is Ca(2+) and Mg(2+)-independent, but it is inhibited by Fe(2+), Cu(2+) and to a lesser extent Zn(2+) ions. Its function is as follows. 5'-&gt;3' exonuclease that hydrolyzes the phosphodiester bond of single-stranded DNA (ssDNA) and RNA molecules to form nucleoside 3'-monophosphates and 5'-end 5'-hydroxy deoxyribonucleotide/ribonucleotide fragments. Partially redundant with PLD4, can cleave all four nucleotides displaying higher efficiency for ssDNA and RNA fragments initiated with uridine and guanosine residues and lower efficiency for cytidine-initiated substrates. As a result, it does not always degrade polynucleotides to the single nucleotide level, it can stall at specific sites sparing certain fragments from exonucleolytic degradation. Processes self and pathogenic ssDNA and RNA molecules that reach the endolysosomal compartment via phagocytosis or autophagy and may serve as 'danger' signals for recognition by innate immune receptors such as toll-like receptors (TLRs). Degrades mitochondrial CpG-rich ssDNA fragments to prevent TLR9 activation and autoinflammatory response, but it can cleave viral RNA to generate ligands for TLR7 activation and initiate antiviral immune responses. In plasmacytoid dendritic cells, it cooperates with endonuclease RNASET2 to release 2',3'-cyclic guanosine monophosphate (2',3'-cGMP), a potent stimulatory ligand for TLR7. Produces 2',3'-cGMPs and cytidine-rich RNA fragments that occupy TLR7 ligand-binding pockets and trigger a signaling-competent state. Can exert polynucleotide phosphatase activity toward 5'-phosphorylated ssDNA substrates although at a slow rate. Transphosphatidylase that catalyzes the exchange with R to S stereo-inversion of the glycerol moiety between (S,R)-lysophosphatidylglycerol (LPG) and monoacylglycerol (MAG) substrates to yield (S,S)-bis(monoacylglycero)phosphate (BMP). Can synthesize a variety of (S,S)-BMPs representing the main phospholipid constituent of lysosomal intralumenal vesicle (ILV) membranes that bind acid hydrolases for lipid degradation. Regulates the homeostasis and interorganellar communication of the endolysosomal system with an overall impact on cellular removal of dysfunctional organelles via autophagy as well as proper protein and lipid turnover. May play a role in myotube formation in response to ER stress. This is 5'-3' exonuclease PLD4 from Mus musculus (Mouse).